The following is a 675-amino-acid chain: Potassium-transporting ATPase ATP-binding subunit (675 aa).

The next 4 helical transmembrane spans lie at Ile34–Ile54, Leu65–Phe85, Ile216–Leu236, and Leu245–Gly265. The active-site 4-aspartylphosphate intermediate is Asp304. ATP-binding positions include Asp341, Glu345, Phe372–Ser379, and Lys390. Mg(2+) contacts are provided by Asp513 and Asp517. The next 3 membrane-spanning stretches (helical) occupy residues Ala569–Met591, Ala611–Met631, and Ile644–Ile664.

The protein belongs to the cation transport ATPase (P-type) (TC 3.A.3) family. Type IA subfamily. As to quaternary structure, the system is composed of three essential subunits: KdpA, KdpB and KdpC.

The protein localises to the cell membrane. It carries out the reaction K(+)(out) + ATP + H2O = K(+)(in) + ADP + phosphate + H(+). In terms of biological role, part of the high-affinity ATP-driven potassium transport (or Kdp) system, which catalyzes the hydrolysis of ATP coupled with the electrogenic transport of potassium into the cytoplasm. This subunit is responsible for energy coupling to the transport system and for the release of the potassium ions to the cytoplasm. This chain is Potassium-transporting ATPase ATP-binding subunit, found in Staphylococcus aureus (strain MSSA476).